The following is a 1297-amino-acid chain: Phosphoribosylformylglycinamidine synthase (1297 aa).

ATP contacts are provided by residues 307–318 (GASTGSGGEIRD) and Ala-678. 3 residues coordinate Mg(2+): Glu-718, Asn-722, and Asp-886. The 254-residue stretch at 1044 to 1297 (MAILREQGVN…MFQNARKYFG (254 aa)) folds into the Glutamine amidotransferase type-1 domain. The active-site Nucleophile is Cys-1137. Residues His-1262 and Glu-1264 contribute to the active site.

In the N-terminal section; belongs to the FGAMS family. In terms of assembly, monomer.

Its subcellular location is the cytoplasm. It catalyses the reaction N(2)-formyl-N(1)-(5-phospho-beta-D-ribosyl)glycinamide + L-glutamine + ATP + H2O = 2-formamido-N(1)-(5-O-phospho-beta-D-ribosyl)acetamidine + L-glutamate + ADP + phosphate + H(+). Its pathway is purine metabolism; IMP biosynthesis via de novo pathway; 5-amino-1-(5-phospho-D-ribosyl)imidazole from N(2)-formyl-N(1)-(5-phospho-D-ribosyl)glycinamide: step 1/2. Functionally, phosphoribosylformylglycinamidine synthase involved in the purines biosynthetic pathway. Catalyzes the ATP-dependent conversion of formylglycinamide ribonucleotide (FGAR) and glutamine to yield formylglycinamidine ribonucleotide (FGAM) and glutamate. In Vibrio cholerae serotype O1 (strain ATCC 39315 / El Tor Inaba N16961), this protein is Phosphoribosylformylglycinamidine synthase.